The chain runs to 491 residues: Protein nucleotidyltransferase YdiU (491 aa).

ATP contacts are provided by Gly-88, Gly-90, Arg-91, Lys-111, Asp-123, Gly-124, Arg-174, and Arg-181. Asp-250 functions as the Proton acceptor in the catalytic mechanism. The Mg(2+) site is built by Asn-251 and Asp-260. Asp-260 provides a ligand contact to ATP.

Belongs to the SELO family. Requires Mg(2+) as cofactor. It depends on Mn(2+) as a cofactor.

The enzyme catalyses L-seryl-[protein] + ATP = 3-O-(5'-adenylyl)-L-seryl-[protein] + diphosphate. It catalyses the reaction L-threonyl-[protein] + ATP = 3-O-(5'-adenylyl)-L-threonyl-[protein] + diphosphate. The catalysed reaction is L-tyrosyl-[protein] + ATP = O-(5'-adenylyl)-L-tyrosyl-[protein] + diphosphate. It carries out the reaction L-histidyl-[protein] + UTP = N(tele)-(5'-uridylyl)-L-histidyl-[protein] + diphosphate. The enzyme catalyses L-seryl-[protein] + UTP = O-(5'-uridylyl)-L-seryl-[protein] + diphosphate. It catalyses the reaction L-tyrosyl-[protein] + UTP = O-(5'-uridylyl)-L-tyrosyl-[protein] + diphosphate. Its function is as follows. Nucleotidyltransferase involved in the post-translational modification of proteins. It can catalyze the addition of adenosine monophosphate (AMP) or uridine monophosphate (UMP) to a protein, resulting in modifications known as AMPylation and UMPylation. The protein is Protein nucleotidyltransferase YdiU of Rhodopseudomonas palustris (strain BisB18).